We begin with the raw amino-acid sequence, 473 residues long: ATP synthase subunit beta (473 aa).

158-165 (GGAGVGKT) lines the ATP pocket.

It belongs to the ATPase alpha/beta chains family. In terms of assembly, F-type ATPases have 2 components, CF(1) - the catalytic core - and CF(0) - the membrane proton channel. CF(1) has five subunits: alpha(3), beta(3), gamma(1), delta(1), epsilon(1). CF(0) has three main subunits: a(1), b(2) and c(9-12). The alpha and beta chains form an alternating ring which encloses part of the gamma chain. CF(1) is attached to CF(0) by a central stalk formed by the gamma and epsilon chains, while a peripheral stalk is formed by the delta and b chains.

It localises to the cell membrane. The enzyme catalyses ATP + H2O + 4 H(+)(in) = ADP + phosphate + 5 H(+)(out). Produces ATP from ADP in the presence of a proton gradient across the membrane. The catalytic sites are hosted primarily by the beta subunits. The chain is ATP synthase subunit beta from Bacillus caldotenax.